We begin with the raw amino-acid sequence, 531 residues long: O-phosphoserine--tRNA(Cys) ligase (531 aa).

Substrate is bound by residues 189–191 (HMT), 234–236 (SAS), 276–277 (YY), and Asn-319.

It belongs to the class-II aminoacyl-tRNA synthetase family. O-phosphoseryl-tRNA(Cys) synthetase subfamily. Homotetramer. Interacts with SepCysS.

It catalyses the reaction tRNA(Cys) + O-phospho-L-serine + ATP = O-phospho-L-seryl-tRNA(Cys) + AMP + diphosphate. Functionally, catalyzes the attachment of O-phosphoserine (Sep) to tRNA(Cys). The protein is O-phosphoserine--tRNA(Cys) ligase of Methanoculleus marisnigri (strain ATCC 35101 / DSM 1498 / JR1).